Here is a 625-residue protein sequence, read N- to C-terminus: Vacuolar-sorting receptor 2 (625 aa).

Positions 1-19 (MRTTNVWLVVIVWVTVGWS) are cleaved as a signal peptide. Topologically, residues 20 to 567 (SCTGRFVVEK…INRDARGDFS (548 aa)) are lumenal. One can recognise a PA domain in the interval 55–167 (QYGGSMSGAV…SLGSAIKTAI (113 aa)). N-linked (GlcNAc...) asparagine glycosylation is found at Asn-147, Asn-293, and Asn-433. EGF-like domains lie at 415–465 (ETNE…THCE) and 468–515 (GALR…KECK). Cystine bridges form between Cys-419–Cys-437, Cys-426–Cys-446, Cys-448–Cys-464, Cys-472–Cys-492, Cys-479–Cys-500, Cys-502–Cys-514, and Cys-544–Cys-557. In terms of domain architecture, EGF-like 3; calcium-binding spans 516-558 (DVNECEEKTACQCRDCKCKNTWGSYECSCSGSLLYIREHDICI). A helical membrane pass occupies residues 568 to 588 (WGVIWIIIMGLGAAALGAYTV). Residues 589-625 (YKYRIRTYMDSEIRAIMAQYMPLDNNPNTQLSSQLEL) are Cytoplasmic-facing. A Tyrosine-based internalization motif motif is present at residues 608-611 (YMPL).

The protein belongs to the VSR (BP-80) family. As to expression, expressed only in flowers.

It localises to the membrane. The protein resides in the golgi apparatus membrane. Its subcellular location is the cytoplasmic vesicle. It is found in the clathrin-coated vesicle membrane. The protein localises to the prevacuolar compartment membrane. Functionally, vacuolar-sorting receptor (VSR) involved in clathrin-coated vesicles sorting from Golgi apparatus to vacuoles. The protein is Vacuolar-sorting receptor 2 of Arabidopsis thaliana (Mouse-ear cress).